A 240-amino-acid chain; its full sequence is Ribonuclease 3 (240 aa).

The region spanning 9 to 141 (VEEFQKKTGI…LLAAIYLDQG (133 aa)) is the RNase III domain. Glu-54 is a binding site for Mg(2+). Residue Asp-58 is part of the active site. Mg(2+) is bound by residues Asp-127 and Glu-130. Glu-130 is a catalytic residue. The region spanning 168-237 (DYKTALQEIV…ARIAYEKLLK (70 aa)) is the DRBM domain.

It belongs to the ribonuclease III family. In terms of assembly, homodimer. It depends on Mg(2+) as a cofactor.

The protein localises to the cytoplasm. It carries out the reaction Endonucleolytic cleavage to 5'-phosphomonoester.. Digests double-stranded RNA. Involved in the processing of primary rRNA transcript to yield the immediate precursors to the large and small rRNAs (23S and 16S). Processes some mRNAs, and tRNAs when they are encoded in the rRNA operon. Processes pre-crRNA and tracrRNA of type II CRISPR loci if present in the organism. The chain is Ribonuclease 3 from Thermotoga sp. (strain RQ2).